The primary structure comprises 1358 residues: DNA-directed RNA polymerase subunit beta (1358 aa).

This sequence belongs to the RNA polymerase beta chain family. The RNAP catalytic core consists of 2 alpha, 1 beta, 1 beta' and 1 omega subunit. When a sigma factor is associated with the core the holoenzyme is formed, which can initiate transcription.

It catalyses the reaction RNA(n) + a ribonucleoside 5'-triphosphate = RNA(n+1) + diphosphate. Its function is as follows. DNA-dependent RNA polymerase catalyzes the transcription of DNA into RNA using the four ribonucleoside triphosphates as substrates. The sequence is that of DNA-directed RNA polymerase subunit beta from Francisella tularensis subsp. novicida (strain U112).